The following is a 57-amino-acid chain: Small ribosomal subunit protein bS21 (57 aa).

The interval 31–57 is disordered; sequence EVRKRKHYEKPSVRRKKKSEAARKRKF. Residues 33-57 show a composition bias toward basic residues; sequence RKRKHYEKPSVRRKKKSEAARKRKF.

The protein belongs to the bacterial ribosomal protein bS21 family.

This Halalkalibacterium halodurans (strain ATCC BAA-125 / DSM 18197 / FERM 7344 / JCM 9153 / C-125) (Bacillus halodurans) protein is Small ribosomal subunit protein bS21 (rpsU).